Consider the following 770-residue polypeptide: Protein PAT1 homolog 1 (770 aa).

The tract at residues 1-42 is disordered; it reads MFRYESLEDCPLDEDEDAFQGLGEEDEEIDQFNDDTFGSGAV. A region A; interaction with DDX6/RCK region spans residues 1-84; that stretch reads MFRYESLEDC…EMDLLGDHEE (84 aa). The tract at residues 1-397 is involved in nuclear foci localization; that stretch reads MFRYESLEDC…HRVSHQDHLR (397 aa). The span at 7 to 33 shows a compositional bias: acidic residues; it reads LEDCPLDEDEDAFQGLGEEDEEIDQFN. The region N; interaction with decapping machinery stretch occupies residues 85–388; the sequence is NLAERLSKMV…LNGTGDRGGH (304 aa). The short motif at 86–95 is the Nuclear export signal element; it reads LAERLSKMVI. S177 bears the Phosphoserine mark. Phosphothreonine is present on T178. A phosphoserine mark is found at S179 and S184. A Phosphothreonine modification is found at T194. An asymmetric dimethylarginine mark is found at R217, R223, and R263. The tract at residues 223–397 is involved in RNA-binding; it reads RYPAPYGERM…HRVSHQDHLR (175 aa). S278 bears the Phosphoserine mark. R284 is subject to Asymmetric dimethylarginine. 2 disordered regions span residues 320–341 and 369–394; these read SAPPPATPPPQQHPPGPGPHLQ and QLQSRNQHRNLNGTGDRGGHRVSHQD. The span at 321 to 337 shows a compositional bias: pro residues; the sequence is APPPATPPPQQHPPGPG. Residues 369–380 are compositionally biased toward low complexity; the sequence is QLQSRNQHRNLN. R385 bears the Omega-N-methylarginine mark. The span at 385–394 shows a compositional bias: basic and acidic residues; the sequence is RGGHRVSHQD. Positions 389-448 are region H; that stretch reads RVSHQDHLRKDPYANLMLQREKDWVSKIQMMQLQSTDPYLDDFYYQNYFEKLEKSSAAEE. Residues 398 to 770 are involved in nuclear speckle localization; that stretch reads KDPYANLMLQ…TKLQLVQGMR (373 aa). Residues 449-770 form a region C region; the sequence is MQGDGPKKER…TKLQLVQGMR (322 aa).

Belongs to the PAT1 family. Interacts (via region A) with DDX6/RCK. Interacts (via region H and region C) with LSM1 and LSM4. Interacts (via region N) with DCP1A, DCP2, EDC3, EDC4 and XRN1. Interacts with the CCR4-NOT complex. Interacts with the Lsm-containing SMN-Sm protein complex. Interacts with EIF4ENIF1/4E-T.

Its subcellular location is the cytoplasm. The protein resides in the P-body. It localises to the nucleus. The protein localises to the PML body. It is found in the nucleus speckle. In terms of biological role, RNA-binding protein involved in deadenylation-dependent decapping of mRNAs, leading to the degradation of mRNAs. Acts as a scaffold protein that connects deadenylation and decapping machinery. Required for cytoplasmic mRNA processing body (P-body) assembly. This Rattus norvegicus (Rat) protein is Protein PAT1 homolog 1 (Patl1).